Reading from the N-terminus, the 292-residue chain is Expansin-like protein 6 (292 aa).

The N-terminal stretch at 1 to 24 (MIKIIYLIVLLVLLFKNNHIIIKA) is a signal peptide. The Extracellular segment spans residues 25-267 (DDCPFPQIPI…QITSNSNNIL (243 aa)). Positions 47 to 150 (HASCGFEKLT…IKVPCPTYGN (104 aa)) constitute an Expansin-like EG45 domain. Cystine bridges form between C50-C80 and C83-C145. An N-linked (GlcNAc...) asparagine glycan is attached at N92. The chain crosses the membrane as a helical span at residues 268–288 (PPSLYIIFLISILFLIINNIF). The Cytoplasmic portion of the chain corresponds to 289 to 292 (SNKY).

This sequence belongs to the expansin family. Expansin A subfamily.

It is found in the membrane. In terms of biological role, may serve to lubricate the movement of the cellulose microfibrils during cell growth and wall extension and/or may serve to maintain the fluid state of the slug cell wall. This chain is Expansin-like protein 6 (expl6), found in Dictyostelium discoideum (Social amoeba).